Here is a 260-residue protein sequence, read N- to C-terminus: NifU-like protein C1709.19c (260 aa).

Residues 161–231 (IKELIETSIR…IPEVENVVQV (71 aa)) form a nifU region.

It belongs to the NifU family.

This is NifU-like protein C1709.19c from Schizosaccharomyces pombe (strain 972 / ATCC 24843) (Fission yeast).